The sequence spans 204 residues: Inactive ribonuclease-like protein 9 (204 aa).

Positions 1-26 (MMRTLITTHPLLLLLLLQQLLQPVQL) are cleaved as a signal peptide. Disulfide bonds link cysteine 97/cysteine 152, cysteine 115/cysteine 167, and cysteine 122/cysteine 129. N-linked (GlcNAc...) asparagine glycosylation is found at asparagine 130 and asparagine 142.

This sequence belongs to the pancreatic ribonuclease family.

It is found in the secreted. In terms of biological role, does not exhibit any ribonuclease activity. The chain is Inactive ribonuclease-like protein 9 (RNASE9) from Chlorocebus aethiops (Green monkey).